The chain runs to 437 residues: Sorting nexin-30 (437 aa).

Residues 1–45 (MAGGPPKALPSTGPQSLRDMPHPLAGSSSEEAVGGDSTPSPDLLM) are disordered. A Phosphothreonine modification is found at Thr-38. Phosphoserine is present on Ser-40. The region spanning 89 to 210 (RDLFVTVDDP…VFLTAKDLNA (122 aa)) is the PX domain. Residues Arg-132, Gln-134, Lys-162, and Arg-176 each coordinate a 1,2-diacyl-sn-glycero-3-phospho-(1D-myo-inositol-3-phosphate). The region spanning 234-437 (KLRSRPLEFA…PLLQEKQETK (204 aa)) is the BAR domain.

The protein belongs to the sorting nexin family. In terms of assembly, heterodimer; heterodimerizes with SNX4.

Its subcellular location is the early endosome membrane. Involved in the regulation of endocytosis and in several stages of intracellular trafficking. Together with SNX4, involved in autophagosome assembly. The chain is Sorting nexin-30 from Mus musculus (Mouse).